Consider the following 306-residue polypeptide: Non-specific ribonucleoside hydrolase RihC (306 aa).

Residue His-235 is part of the active site.

The protein belongs to the IUNH family. RihC subfamily.

Functionally, hydrolyzes both purine and pyrimidine ribonucleosides with a broad-substrate specificity. The protein is Non-specific ribonucleoside hydrolase RihC of Salmonella paratyphi C (strain RKS4594).